A 151-amino-acid chain; its full sequence is Alpha-latroinsectotoxin-Lh1a (151 aa).

8 ANK repeats span residues 21 to 37, 41 to 52, 56 to 80, 84 to 104, 105 to 116, 117 to 125, 126 to 146, and 147 to 151; these read TDVT…DLNA, ILIRNTNAVINI, VGLT…YLND, NGMT…VDFL, KWTPLHLAILFK, QLVIELLAK, TFFD…AVEK, and YIAAR.

It belongs to the cationic peptide 01 (latrotoxin) family. 02 (alpha-latroinsectotoxin) subfamily. Homotetramer in membranes. As to expression, expressed by the venom gland.

It localises to the secreted. It is found in the target cell membrane. Functionally, insecticidal presynaptic neurotoxin that induces massive neurotransmitter release at insect (but not vertebrate) neuromuscular junctions. Native toxin forms cation-permeable pores (with high permeability to calcium) in lipid membranes locust muscle membrane and artificial lipid bilayers. May bind to insect neurexin-1 homolog, insect adhesion G protein-coupled receptor L1 homolog, and insect receptor-type tyrosine-protein phosphatase S homolog, and induces neurotransmitter exocytosis both by forming tetrameric pores in membranes and signaling via G protein-coupled receptor. Oligomerization is a process independent of divalent cations. The toxin forms channels with 0.55-0.58 nm entrance diameter and a relatively small conductance in planar phospholipid membranes. The polypeptide is Alpha-latroinsectotoxin-Lh1a (Latrodectus hasselti (Redback spider)).